We begin with the raw amino-acid sequence, 152 residues long: Ribosome maturation factor RimP (152 aa).

It belongs to the RimP family.

The protein localises to the cytoplasm. Its function is as follows. Required for maturation of 30S ribosomal subunits. This is Ribosome maturation factor RimP from Escherichia coli (strain K12 / MC4100 / BW2952).